Here is a 221-residue protein sequence, read N- to C-terminus: CASP-like protein 4B1 (221 aa).

Residues 1–78 (MAMQLHAASP…HDHHGGGGGG (78 aa)) form a disordered region. At 1–87 (MAMQLHAASP…GDEATQLLNG (87 aa)) the chain is on the cytoplasmic side. The segment covering 19 to 33 (SPPPPPPLSPHPEPA) has biased composition (pro residues). Residues 50-62 (APVATATTPLTPG) are compositionally biased toward low complexity. A helical membrane pass occupies residues 88–108 (IVLVLRAGAALLSFVAMALVA). Topologically, residues 109–125 (SCRHGDWMDFLRYQEYR) are extracellular. Residues 126–146 (YLLGVSVVAFVYSAAQALKNF) traverse the membrane as a helical segment. Residues 147-160 (RRRRRGAADASFLD) lie on the Cytoplasmic side of the membrane. A helical transmembrane segment spans residues 161–181 (FAGDQAVAYLLVTASAAALPI). The Extracellular portion of the chain corresponds to 182 to 196 (TIRMRSAVVNVFTDA). Residues 197-217 (IAASIALGFLAFAALALSAML) traverse the membrane as a helical segment. At 218–221 (SRHA) the chain is on the cytoplasmic side.

The protein belongs to the Casparian strip membrane proteins (CASP) family. In terms of assembly, homodimer and heterodimers.

It localises to the cell membrane. This Hordeum vulgare subsp. vulgare (Domesticated barley) protein is CASP-like protein 4B1.